A 238-amino-acid chain; its full sequence is Probable transcriptional regulatory protein CAB166 (238 aa).

It belongs to the TACO1 family.

The protein localises to the cytoplasm. This is Probable transcriptional regulatory protein CAB166 from Chlamydia abortus (strain DSM 27085 / S26/3) (Chlamydophila abortus).